Consider the following 115-residue polypeptide: Putative septation protein SpoVG (115 aa).

Residues 88–115 (PGTIATSEVSSQLEESDSDKTLSEDLKA) are disordered. Over residues 91–100 (IATSEVSSQL) the composition is skewed to polar residues. A compositionally biased stretch (basic and acidic residues) spans 105 to 115 (SDKTLSEDLKA).

The protein belongs to the SpoVG family.

Functionally, could be involved in septation. The protein is Putative septation protein SpoVG of Macrococcus caseolyticus (strain JCSC5402) (Macrococcoides caseolyticum).